The primary structure comprises 206 residues: Two-component response regulator ORR7 (206 aa).

The disordered stretch occupies residues 53–92 (VVPLHDNASAEDDDDDEEDDDEDDDDDDDEDDEEEAAPPY). The span at 61 to 88 (SAEDDDDDEEDDDEDDDDDDDEDDEEEA) shows a compositional bias: acidic residues. Residues 92–205 (YVMAVDDSSV…DISRITSRML (114 aa)) form the Response regulatory domain. D138 carries the 4-aspartylphosphate modification.

It belongs to the ARR family. Type-A subfamily. Post-translationally, two-component system major event consists of a His-to-Asp phosphorelay between a sensor histidine kinase (HK) and a response regulator (RR). In plants, the His-to-Asp phosphorelay involves an additional intermediate named Histidine-containing phosphotransfer protein (HPt). This multistep phosphorelay consists of a His-Asp-His-Asp sequential transfer of a phosphate group between first a His and an Asp of the HK protein, followed by the transfer to a conserved His of the HPt protein and finally the transfer to an Asp in the receiver domain of the RR protein. As to expression, expressed in flowers, and at low levels in roots, mature leaves and shoots.

Functionally, functions as a response regulator involved in His-to-Asp phosphorelay signal transduction system. Phosphorylation of the Asp residue in the receiver domain activates the ability of the protein to promote the transcription of target genes. Type-A response regulators seem to act as negative regulators of the cytokinin signaling. The polypeptide is Two-component response regulator ORR7 (Oryza sativa subsp. indica (Rice)).